Consider the following 697-residue polypeptide: Glycine--tRNA ligase beta subunit (697 aa).

This sequence belongs to the class-II aminoacyl-tRNA synthetase family. As to quaternary structure, tetramer of two alpha and two beta subunits.

The protein localises to the cytoplasm. The catalysed reaction is tRNA(Gly) + glycine + ATP = glycyl-tRNA(Gly) + AMP + diphosphate. The protein is Glycine--tRNA ligase beta subunit of Cereibacter sphaeroides (strain ATCC 17023 / DSM 158 / JCM 6121 / CCUG 31486 / LMG 2827 / NBRC 12203 / NCIMB 8253 / ATH 2.4.1.) (Rhodobacter sphaeroides).